A 433-amino-acid chain; its full sequence is Oxysterol-binding protein-like protein OBPa (433 aa).

It belongs to the OSBP family.

This Candida albicans (strain SC5314 / ATCC MYA-2876) (Yeast) protein is Oxysterol-binding protein-like protein OBPa (OBPA).